We begin with the raw amino-acid sequence, 707 residues long: Protein kinase C theta type (707 aa).

Positions 1–107 constitute a C2 domain; it reads MSPFLRIGLS…KNNGRTEIWL (107 aa). Y90 is modified (phosphotyrosine; by LCK). Residues 159–209 form a Phorbol-ester/DAG-type 1 zinc finger; the sequence is CHEFTATFFPQPTFCSVCHEFVWGLNKQGYQCRRCNAAIHKKCIDKVIAKC. Residue T219 is modified to Phosphothreonine; by autocatalysis. Residues 231 to 281 form a Phorbol-ester/DAG-type 2 zinc finger; that stretch reads PHRFKVYNYKSPTFCEHCGTLLWGLARQGLKCDACGMNVHHRCQTKVANLC. S348 carries the post-translational modification Phosphoserine. The 255-residue stretch at 380-634 folds into the Protein kinase domain; that stretch reads FILHKMLGKG…RGDIRQHPLF (255 aa). ATP-binding positions include 386–394 and K409; that span reads LGKGSFGKV. D504 functions as the Proton acceptor in the catalytic mechanism. T538 carries the phosphothreonine; by PDPK1 modification. The region spanning 635-706 is the AGC-kinase C-terminal domain; it reads REINWEELER…INPGMETLIC (72 aa). A phosphoserine mark is found at S676 and S685. The residue at position 695 (S695) is a Phosphoserine; by autocatalysis.

Belongs to the protein kinase superfamily. AGC Ser/Thr protein kinase family. PKC subfamily. Part of a membrane raft complex composed at least of BCL10, CARD11, MALT1 and IKBKB. Interacts with GLRX3 (via N-terminus). Interacts with ECT2. Interacts with CCDC88A/GIV; the interaction leads to phosphorylation of CCDC88A and inhibition of its guanine nucleotide exchange factor activity. Interacts with CD28. Mg(2+) is required as a cofactor. Post-translationally, autophosphorylation at Thr-219 is required for targeting to the TCR and cellular function of PRKCQ upon antigen receptor ligation. Following TCR stimulation, phosphorylated at Tyr-90 and Ser-685.

It localises to the cytoplasm. The protein localises to the cell membrane. It carries out the reaction L-seryl-[protein] + ATP = O-phospho-L-seryl-[protein] + ADP + H(+). It catalyses the reaction L-threonyl-[protein] + ATP = O-phospho-L-threonyl-[protein] + ADP + H(+). Novel PKCs (PRKCD, PRKCE, PRKCH and PRKCQ) are calcium-insensitive, but activated by diacylglycerol (DAG) and phosphatidylserine. Three specific sites; Thr-538 (activation loop of the kinase domain), Ser-676 (turn motif) and Ser-695 (hydrophobic region), need to be phosphorylated for its full activation. Calcium-independent, phospholipid- and diacylglycerol (DAG)-dependent serine/threonine-protein kinase that mediates non-redundant functions in T-cell receptor (TCR) signaling, including T-cells activation, proliferation, differentiation and survival, by mediating activation of multiple transcription factors such as NF-kappa-B, JUN, NFATC1 and NFATC2. In TCR-CD3/CD28-co-stimulated T-cells, is required for the activation of NF-kappa-B and JUN, which in turn are essential for IL2 production, and participates in the calcium-dependent NFATC1 and NFATC2 transactivation. Mediates the activation of the canonical NF-kappa-B pathway (NFKB1) by direct phosphorylation of CARD11 on several serine residues, inducing CARD11 association with lipid rafts and recruitment of the BCL10-MALT1 complex, which then activates IKK complex, resulting in nuclear translocation and activation of NFKB1. May also play an indirect role in activation of the non-canonical NF-kappa-B (NFKB2) pathway. In the signaling pathway leading to JUN activation, acts by phosphorylating the mediator STK39/SPAK and may not act through MAP kinases signaling. Plays a critical role in TCR/CD28-induced NFATC1 and NFATC2 transactivation by participating in the regulation of reduced inositol 1,4,5-trisphosphate generation and intracellular calcium mobilization. After costimulation of T-cells through CD28 can phosphorylate CBLB and is required for the ubiquitination and subsequent degradation of CBLB, which is a prerequisite for the activation of TCR. During T-cells differentiation, plays an important role in the development of T-helper 2 (Th2) cells following immune and inflammatory responses, and, in the development of inflammatory autoimmune diseases, is necessary for the activation of IL17-producing Th17 cells. May play a minor role in Th1 response. Upon TCR stimulation, mediates T-cell protective survival signal by phosphorylating BAD, thus protecting T-cells from BAD-induced apoptosis, and by up-regulating BCL-X(L)/BCL2L1 levels through NF-kappa-B and JUN pathways. In platelets, regulates signal transduction downstream of the ITGA2B, CD36/GP4, F2R/PAR1 and F2RL3/PAR4 receptors, playing a positive role in 'outside-in' signaling and granule secretion signal transduction. May relay signals from the activated ITGA2B receptor by regulating the uncoupling of WASP and WIPF1, thereby permitting the regulation of actin filament nucleation and branching activity of the Arp2/3 complex. May mediate inhibitory effects of free fatty acids on insulin signaling by phosphorylating IRS1, which in turn blocks IRS1 tyrosine phosphorylation and downstream activation of the PI3K/AKT pathway. Phosphorylates MSN (moesin) in the presence of phosphatidylglycerol or phosphatidylinositol. Phosphorylates PDPK1 at 'Ser-504' and 'Ser-532' and negatively regulates its ability to phosphorylate PKB/AKT1. Phosphorylates CCDC88A/GIV and inhibits its guanine nucleotide exchange factor activity. Phosphorylates and activates LRRK1, which phosphorylates RAB proteins involved in intracellular trafficking. The chain is Protein kinase C theta type (Prkcq) from Rattus norvegicus (Rat).